A 275-amino-acid chain; its full sequence is Arylamine N-acetyltransferase (275 aa).

Residue C70 is the Acyl-thioester intermediate of the active site. Residues H110 and D127 contribute to the active site.

The protein belongs to the arylamine N-acetyltransferase family. As to quaternary structure, homodimer and homotetramer.

The enzyme catalyses an arylamine + acetyl-CoA = an N-acetylarylamine + CoA. Functionally, catalyzes the transfer of the acetyl group from acetyl coenzyme A to the free amino group of arylamines and hydrazines. Substrates include isoniazid, anisidine, and 4-aminoveratrole, and to a much lesser extent, p-aminobenzoic acid. This Mycolicibacterium smegmatis (Mycobacterium smegmatis) protein is Arylamine N-acetyltransferase.